A 243-amino-acid polypeptide reads, in one-letter code: Epoxyqueuosine reductase QueH (243 aa).

The span at 1-16 shows a compositional bias: basic and acidic residues; it reads MHRTKLEQKQPHFDAQ. Residues 1–30 are disordered; sequence MHRTKLEQKQPHFDAQKRRKKECKNSNTPF. 4 residues coordinate [4Fe-4S] cluster: C49, C50, C128, and C131. C211 and C213 are oxidised to a cystine.

The protein belongs to the QueH family.

The catalysed reaction is epoxyqueuosine(34) in tRNA + AH2 = queuosine(34) in tRNA + A + H2O. The protein operates within tRNA modification; tRNA-queuosine biosynthesis. Catalyzes the conversion of epoxyqueuosine (oQ) to queuosine (Q), which is a hypermodified base found in the wobble positions of tRNA(Asp), tRNA(Asn), tRNA(His) and tRNA(Tyr). The protein is Epoxyqueuosine reductase QueH of Histophilus somni (strain 129Pt) (Haemophilus somnus).